We begin with the raw amino-acid sequence, 478 residues long: Protein nucleotidyltransferase YdiU (478 aa).

Gly84, Gly86, Arg87, Lys107, Asp119, Gly120, Arg170, and Arg177 together coordinate ATP. Catalysis depends on Asp246, which acts as the Proton acceptor. Residues Asn247 and Asp256 each contribute to the Mg(2+) site. Asp256 is an ATP binding site.

Belongs to the SELO family. Requires Mg(2+) as cofactor. The cofactor is Mn(2+).

It carries out the reaction L-seryl-[protein] + ATP = 3-O-(5'-adenylyl)-L-seryl-[protein] + diphosphate. It catalyses the reaction L-threonyl-[protein] + ATP = 3-O-(5'-adenylyl)-L-threonyl-[protein] + diphosphate. The enzyme catalyses L-tyrosyl-[protein] + ATP = O-(5'-adenylyl)-L-tyrosyl-[protein] + diphosphate. The catalysed reaction is L-histidyl-[protein] + UTP = N(tele)-(5'-uridylyl)-L-histidyl-[protein] + diphosphate. It carries out the reaction L-seryl-[protein] + UTP = O-(5'-uridylyl)-L-seryl-[protein] + diphosphate. It catalyses the reaction L-tyrosyl-[protein] + UTP = O-(5'-uridylyl)-L-tyrosyl-[protein] + diphosphate. Functionally, nucleotidyltransferase involved in the post-translational modification of proteins. It can catalyze the addition of adenosine monophosphate (AMP) or uridine monophosphate (UMP) to a protein, resulting in modifications known as AMPylation and UMPylation. This is Protein nucleotidyltransferase YdiU from Escherichia coli O7:K1 (strain IAI39 / ExPEC).